Here is a 387-residue protein sequence, read N- to C-terminus: Probable tRNA sulfurtransferase (387 aa).

The THUMP domain occupies 67–167; the sequence is SLLKNLFTRL…KEHFLIISES (101 aa). Residues 185–186, 210–211, Arg269, Gly287, and Gln296 contribute to the ATP site; these read LL and TF.

This sequence belongs to the ThiI family.

The protein localises to the cytoplasm. It catalyses the reaction [ThiI sulfur-carrier protein]-S-sulfanyl-L-cysteine + a uridine in tRNA + 2 reduced [2Fe-2S]-[ferredoxin] + ATP + H(+) = [ThiI sulfur-carrier protein]-L-cysteine + a 4-thiouridine in tRNA + 2 oxidized [2Fe-2S]-[ferredoxin] + AMP + diphosphate. It carries out the reaction [ThiS sulfur-carrier protein]-C-terminal Gly-Gly-AMP + S-sulfanyl-L-cysteinyl-[cysteine desulfurase] + AH2 = [ThiS sulfur-carrier protein]-C-terminal-Gly-aminoethanethioate + L-cysteinyl-[cysteine desulfurase] + A + AMP + 2 H(+). It functions in the pathway cofactor biosynthesis; thiamine diphosphate biosynthesis. Functionally, catalyzes the ATP-dependent transfer of a sulfur to tRNA to produce 4-thiouridine in position 8 of tRNAs, which functions as a near-UV photosensor. Also catalyzes the transfer of sulfur to the sulfur carrier protein ThiS, forming ThiS-thiocarboxylate. This is a step in the synthesis of thiazole, in the thiamine biosynthesis pathway. The sulfur is donated as persulfide by IscS. The chain is Probable tRNA sulfurtransferase from Mycoplasma pneumoniae (strain ATCC 29342 / M129 / Subtype 1) (Mycoplasmoides pneumoniae).